A 66-amino-acid polypeptide reads, in one-letter code: Large ribosomal subunit protein uL29 (66 aa).

It belongs to the universal ribosomal protein uL29 family.

The protein is Large ribosomal subunit protein uL29 of Helicobacter pylori (strain Shi470).